The primary structure comprises 962 residues: Spliceosome associated factor 3, U4/U6 recycling protein (962 aa).

Positions 1 to 21 (MATTAASSASEPEVEPQAGPE) are enriched in low complexity. The tract at residues 1–92 (MATTAASSAS…EDEWEYDEEE (92 aa)) is disordered. Ala2 carries the post-translational modification N-acetylalanine. Residues 2–352 (ATTAASSASE…LVPDLWIRYS (351 aa)) are mediates interaction with PRPF3. At Ser10 the chain carries Phosphoserine. A compositionally biased stretch (acidic residues) spans 81-92 (AGEDEWEYDEEE). 9 HAT repeats span residues 127 to 159 (GELS…DEIS), 165 to 196 (LDRE…YSVG), 202 to 238 (GGLE…FESA), 243 to 276 (ARLE…WSEE), 325 to 357 (GDPA…YLDR), 360 to 392 (KVKD…AMER), 395 to 431 (LDHQ…YLRR), 441 to 474 (KELE…PSCL), and 488 to 521 (NNMQ…LERA). At Ser216 the chain carries Phosphoserine. Residues 488-521 (NNMQKARELWDSIMTRGNAKYANMWLEYYNLERA) form a required for interaction with USP4 region. The interval 538–952 (CTSDYPEHVC…VATEAPKMSN (415 aa)) is necessary and sufficient for U6 snRNA binding. Positions 559 to 618 (TLEDWDLAIQKTETRLARVNEQRMKAAEKEAALVQQEEEKAEQRKKVRAEKKALKKKKKT) form a coiled coil. The segment covering 591–602 (LVQQEEEKAEQR) has biased composition (basic and acidic residues). The disordered stretch occupies residues 591-696 (LVQQEEEKAE…SLKRDMPKVA (106 aa)). Positions 601–670 (QRKKVRAEKK…KEETELSGKC (70 aa)) are required for nuclear localization. The short motif at 602-609 (RKKVRAEK) is the Nuclear localization signal element. Residues 603-618 (KKVRAEKKALKKKKKT) are compositionally biased toward basic residues. The span at 627 to 640 (DEDEENEWGEEEEE) shows a compositional bias: acidic residues. Ser651 is modified (phosphoserine). Over residues 680–696 (KQKEKAASLKRDMPKVA) the composition is skewed to basic and acidic residues. Positions 704–782 (VTVFVSNLPY…RPMFVSPCVD (79 aa)) constitute an RRM 1 domain. A phosphoserine mark is found at Ser795 and Ser852. The RRM 2 domain maps to 801–878 (HKLFISGLPF…NVIKVAISNP (78 aa)). Residues 880–962 (QRKVPEKPEV…ADFAKLLLRK (83 aa)) form a disordered region. Arg906 carries the post-translational modification Omega-N-methylarginine.

In terms of assembly, component of the 7SK snRNP complex at least composed of P-TEFb (composed of CDK9 and CCNT1/cyclin-T1), HEXIM1, HEXIM2, BCDIN3, SART3 proteins and 7SK and U6 snRNAs. Interacts with AGO1 and AGO2. Interacts with PRPF3 and USP4; the interaction with PRPF3 is direct and recruits USP4 to its substrate PRPF3. Interacts with USP15; the interaction is direct. In terms of tissue distribution, ubiquitously expressed, with low level of expression in liver, heart and skeletal. Also detected in hematopoietic cells (at protein level).

It is found in the nucleus. The protein localises to the nucleoplasm. The protein resides in the cajal body. Its subcellular location is the nucleus speckle. It localises to the cytoplasm. Its function is as follows. U6 snRNP-binding protein that functions as a recycling factor of the splicing machinery. Promotes the initial reassembly of U4 and U6 snRNPs following their ejection from the spliceosome during its maturation. Also binds U6atac snRNPs and may function as a recycling factor for U4atac/U6atac spliceosomal snRNP, an initial step in the assembly of U12-type spliceosomal complex. The U12-type spliceosomal complex plays a role in the splicing of introns with non-canonical splice sites. May also function as a substrate-targeting factor for deubiquitinases like USP4 and USP15. Recruits USP4 to ubiquitinated PRPF3 within the U4/U5/U6 tri-snRNP complex, promoting PRPF3 deubiquitination and thereby regulating the spliceosome U4/U5/U6 tri-snRNP spliceosomal complex disassembly. May also recruit the deubiquitinase USP15 to histone H2B and mediate histone deubiquitination, thereby regulating gene expression and/or DNA repair. May play a role in hematopoiesis probably through transcription regulation of specific genes including MYC. This chain is Spliceosome associated factor 3, U4/U6 recycling protein, found in Mus musculus (Mouse).